Consider the following 555-residue polypeptide: Potassium-transporting ATPase potassium-binding subunit (555 aa).

The next 10 membrane-spanning stretches (helical) occupy residues 2-22, 60-80, 130-150, 173-193, 246-266, 278-298, 374-394, 412-432, 483-503, and 525-545; these read IWVA…PTGI, QYAL…YFIF, IGIT…VMAF, VFLP…VPQT, MSNI…PFTY, ILFV…TTSE, AGFV…GLMV, LIAV…ALAL, LVMF…AASL, and GIFI…MLVL.

It belongs to the KdpA family. The system is composed of three essential subunits: KdpA, KdpB and KdpC.

It localises to the cell membrane. Its function is as follows. Part of the high-affinity ATP-driven potassium transport (or Kdp) system, which catalyzes the hydrolysis of ATP coupled with the electrogenic transport of potassium into the cytoplasm. This subunit binds the extracellular potassium ions and delivers the ions to the membrane domain of KdpB through an intramembrane tunnel. The protein is Potassium-transporting ATPase potassium-binding subunit of Bacillus thuringiensis (strain Al Hakam).